The primary structure comprises 223 residues: Putative oxidoreductase MT1904 (223 aa).

4 to 28 (LVTGGDTDLGRTMAEGFRNDGHKVT) lines the NADP(+) pocket. Ser-128 is a binding site for substrate.

This sequence belongs to the short-chain dehydrogenases/reductases (SDR) family.

The chain is Putative oxidoreductase MT1904 from Mycobacterium tuberculosis (strain CDC 1551 / Oshkosh).